Consider the following 490-residue polypeptide: MSRMAEQQLYIHGGYTSATSGRTFETINPANGNVLATVQAAGREDVDRAVKSAQQGQKIWAAMTAMERSRILRRAVDILRERNDELAKLETLDTGKAYSETSTVDIVTGADVLEYYAGLIPALEGSQIPLRETLFVYTRREPLGVVAGIGAWNYPIQIALWKSAPALAAGNAMIFKPSEVTPLTALKLAEIYSEAGLPDGVFNVLPGVGAETGQYLTEHPGIAKVSFTGGVASGKKVMANSAASSLKEVTMELGGKSPLIVFDDADLDLAADIAMMANFFSSGQVCTNGTRVFVPAKCKAAFEQKILARVERIRAGDVFDPQTNFGPLVSFPHRDNVLRYIVKGKEEGARVLCGGDVLKGDGLDNGAWVAPTVFTDCSDEMTIVREEIFGPVMSILTYESEEEVIRRANDTDYGLAAGIVTADLNRAHRVIHQLEAGICWINTWGESPAEMPVGGYKHSGIGRENGVMTLQSYTQVKSIQVEMAKFQSIF.

K(+)-binding residues include T26, I27, and D93. 150-152 (GAW) provides a ligand contact to NAD(+). The active-site Charge relay system is the K162. Residue 176–179 (KPSE) coordinates NAD(+). V180 contacts K(+). Position 230-233 (230-233 (GVAS)) interacts with NAD(+). L246 provides a ligand contact to K(+). E252 (proton acceptor) is an active-site residue. Residues G254, C286, and E387 each coordinate NAD(+). Residue C286 is the Nucleophile of the active site. C286 carries the cysteine sulfenic acid (-SOH) modification. Positions 457 and 460 each coordinate K(+). E464 serves as the catalytic Charge relay system.

It belongs to the aldehyde dehydrogenase family. In terms of assembly, dimer of dimers. K(+) serves as cofactor.

The catalysed reaction is betaine aldehyde + NAD(+) + H2O = glycine betaine + NADH + 2 H(+). Its pathway is amine and polyamine biosynthesis; betaine biosynthesis via choline pathway; betaine from betaine aldehyde: step 1/1. Its function is as follows. Involved in the biosynthesis of the osmoprotectant glycine betaine. Catalyzes the irreversible oxidation of betaine aldehyde to the corresponding acid. The protein is Betaine aldehyde dehydrogenase of Escherichia coli O8 (strain IAI1).